The following is a 616-amino-acid chain: Membrane protein insertase YidC (616 aa).

The chain crosses the membrane as a helical span at residues methionine 8 to glycine 28. The tract at residues arginine 33–aspartate 85 is disordered. 2 stretches are compositionally biased toward low complexity: residues glutamine 36–alanine 51 and glycine 62–proline 80. The next 4 membrane-spanning stretches (helical) occupy residues leucine 386–leucine 406, tryptophan 460–isoleucine 480, tyrosine 516–methionine 536, and phenylalanine 551–isoleucine 571.

It belongs to the OXA1/ALB3/YidC family. Type 1 subfamily. In terms of assembly, interacts with the Sec translocase complex via SecD. Specifically interacts with transmembrane segments of nascent integral membrane proteins during membrane integration.

It is found in the cell inner membrane. Its function is as follows. Required for the insertion and/or proper folding and/or complex formation of integral membrane proteins into the membrane. Involved in integration of membrane proteins that insert both dependently and independently of the Sec translocase complex, as well as at least some lipoproteins. Aids folding of multispanning membrane proteins. The polypeptide is Membrane protein insertase YidC (Methylorubrum extorquens (strain PA1) (Methylobacterium extorquens)).